The following is a 490-amino-acid chain: ATP synthase subunit beta (490 aa).

175-182 is an ATP binding site; the sequence is GGAGVGKT.

It belongs to the ATPase alpha/beta chains family. In terms of assembly, F-type ATPases have 2 components, CF(1) - the catalytic core - and CF(0) - the membrane proton channel. CF(1) has five subunits: alpha(3), beta(3), gamma(1), delta(1), epsilon(1). CF(0) has three main subunits: a(1), b(2) and c(9-12). The alpha and beta chains form an alternating ring which encloses part of the gamma chain. CF(1) is attached to CF(0) by a central stalk formed by the gamma and epsilon chains, while a peripheral stalk is formed by the delta and b chains.

The protein localises to the cell membrane. It carries out the reaction ATP + H2O + 4 H(+)(in) = ADP + phosphate + 5 H(+)(out). Its function is as follows. Produces ATP from ADP in the presence of a proton gradient across the membrane. The catalytic sites are hosted primarily by the beta subunits. The protein is ATP synthase subunit beta of Acidothermus cellulolyticus (strain ATCC 43068 / DSM 8971 / 11B).